A 137-amino-acid polypeptide reads, in one-letter code: Protein PsiE homolog (137 aa).

Transmembrane regions (helical) follow at residues 15-35 (LRIT…AFLI), 55-75 (YYMT…ALIV), 82-102 (FHFP…RFII), and 108-128 (ATST…LFLA).

The protein belongs to the PsiE family.

The protein resides in the cell membrane. The sequence is that of Protein PsiE homolog from Listeria innocua serovar 6a (strain ATCC BAA-680 / CLIP 11262).